Consider the following 857-residue polypeptide: MAEAIVSVTVQKLGQLLLEEPLFLFGIGDQVKQLQDELKRLNCFLKDADEKQHESERVRNWVAGIREASYDAEDILEAFFLKAESRKQKGMKRVLRRLACILNEAVSLHSVGSEIREITSRLSKIAASMLDFGIKESMGREGLSLSDSLREQRQSFPYVVEHNLVGLEQSLEKLVNDLVSGGEKLRVTSICGMGGLGKTTLAKQIFHHHKVRRHFDRFAWVYVSQDCRRRHVWQDIFLNLSYKDENQRILSLRDEQLGEELHRFLKRNKCLIVLDDIWGKDAWDCLKHVFPHETGSEIILTTRNKEVALYADPRGVLHEPQLLTCEESWELLEKISLSGRENIEPMLVKKMEEIGKQIVVRCGGLPLAITVLGGLLATKSTWNEWQRVCENIKSYVSNGGSSNGSKNMLVADVLCLSYEYLPPHVKQCFLYFAHYPEDYEVHVGTLVSYCIAEGMVMPVKHTEAGTTVEDVGQDYLEELVKRSMVMVGRRDIVTSEVMTCRMHDLMREVCLQKAKQESFVQVIDSRDQDEAEAFISLSTNTSRRISVQLHGGAEEHHIKSLSQVSFRKMKLLRVLDLEGAQIEGGKLPDDVGDLIHLRNLSVRLTNVKELTSSIGNLKLMITLDLFVKGQLYIPNQLWDFPVGKCNPRDLLAMTSLRRLSINLSSQNTDFVVVSSLSKVLKRLRGLTINVPCEPMLPPVDVTQLVSAFTNLCELELFLKLEKLPGEQSFSSDLGALRLWQCGLVDDPFMVLEKLPNLKILQLFEGSFVGSKLCCSKNLENLEEWTVEDGAMMRLVTVELKCCNKLKSVPEGTRFLKNLQEVEIGNRTKAFKDKLISGGEDFYKVQHVPCVVFENCEL.

A coiled-coil region spans residues 27-60 (IGDQVKQLQDELKRLNCFLKDADEKQHESERVRN). The 314-residue stretch at 148-461 (SLREQRQSFP…AEGMVMPVKH (314 aa)) folds into the NB-ARC domain. An ATP-binding site is contributed by 192-199 (GMGGLGKT). 4 LRR repeats span residues 653-678 (MTSL…SLSK), 680-703 (LKRL…DVTQ), 754-780 (LPNL…NLEN), and 791-816 (MMRL…RFLK).

Belongs to the disease resistance NB-LRR family.

In terms of biological role, potential disease resistance protein. In Arabidopsis thaliana (Mouse-ear cress), this protein is Putative disease resistance protein At1g50180.